Reading from the N-terminus, the 423-residue chain is Serine hydroxymethyltransferase (423 aa).

Residues leucine 120 and glycine 124 to leucine 126 each bind (6S)-5,6,7,8-tetrahydrofolate. The residue at position 229 (lysine 229) is an N6-(pyridoxal phosphate)lysine. Serine 353–phenylalanine 355 contributes to the (6S)-5,6,7,8-tetrahydrofolate binding site.

The protein belongs to the SHMT family. As to quaternary structure, homodimer. Pyridoxal 5'-phosphate is required as a cofactor.

It is found in the cytoplasm. The enzyme catalyses (6R)-5,10-methylene-5,6,7,8-tetrahydrofolate + glycine + H2O = (6S)-5,6,7,8-tetrahydrofolate + L-serine. The protein operates within one-carbon metabolism; tetrahydrofolate interconversion. It functions in the pathway amino-acid biosynthesis; glycine biosynthesis; glycine from L-serine: step 1/1. Its function is as follows. Catalyzes the reversible interconversion of serine and glycine with tetrahydrofolate (THF) serving as the one-carbon carrier. This reaction serves as the major source of one-carbon groups required for the biosynthesis of purines, thymidylate, methionine, and other important biomolecules. Also exhibits THF-independent aldolase activity toward beta-hydroxyamino acids, producing glycine and aldehydes, via a retro-aldol mechanism. The chain is Serine hydroxymethyltransferase from Prochlorococcus marinus (strain MIT 9515).